The chain runs to 228 residues: Cytochrome c oxidase subunit 2 (228 aa).

The Mitochondrial intermembrane segment spans residues 1–26 (MSTWANLGLQDSASPLMEQLIFFHDH). The helical transmembrane segment at 27–48 (ALLILVMITVLVGYLMFMLFFN) threads the bilayer. Residues 49–62 (NYVNRFLLHGQLIE) lie on the Mitochondrial matrix side of the membrane. A helical membrane pass occupies residues 63–82 (MIWTILPAIILLFIALPSLR). Residues 83 to 228 (LLYLLDEINE…FIKWISSNNS (146 aa)) are Mitochondrial intermembrane-facing. The Cu cation site is built by histidine 161, cysteine 196, glutamate 198, cysteine 200, histidine 204, and methionine 207. Position 198 (glutamate 198) interacts with Mg(2+).

It belongs to the cytochrome c oxidase subunit 2 family. As to quaternary structure, component of the cytochrome c oxidase (complex IV, CIV), a multisubunit enzyme composed of a catalytic core of 3 subunits and several supernumerary subunits. The complex exists as a monomer or a dimer and forms supercomplexes (SCs) in the inner mitochondrial membrane with ubiquinol-cytochrome c oxidoreductase (cytochrome b-c1 complex, complex III, CIII). Cu cation serves as cofactor.

The protein resides in the mitochondrion inner membrane. The enzyme catalyses 4 Fe(II)-[cytochrome c] + O2 + 8 H(+)(in) = 4 Fe(III)-[cytochrome c] + 2 H2O + 4 H(+)(out). In terms of biological role, component of the cytochrome c oxidase, the last enzyme in the mitochondrial electron transport chain which drives oxidative phosphorylation. The respiratory chain contains 3 multisubunit complexes succinate dehydrogenase (complex II, CII), ubiquinol-cytochrome c oxidoreductase (cytochrome b-c1 complex, complex III, CIII) and cytochrome c oxidase (complex IV, CIV), that cooperate to transfer electrons derived from NADH and succinate to molecular oxygen, creating an electrochemical gradient over the inner membrane that drives transmembrane transport and the ATP synthase. Cytochrome c oxidase is the component of the respiratory chain that catalyzes the reduction of oxygen to water. Electrons originating from reduced cytochrome c in the intermembrane space (IMS) are transferred via the dinuclear copper A center (CU(A)) of subunit 2 and heme A of subunit 1 to the active site in subunit 1, a binuclear center (BNC) formed by heme A3 and copper B (CU(B)). The BNC reduces molecular oxygen to 2 water molecules using 4 electrons from cytochrome c in the IMS and 4 protons from the mitochondrial matrix. In Drosophila melanogaster (Fruit fly), this protein is Cytochrome c oxidase subunit 2 (mt:CoII).